The chain runs to 121 residues: Large ribosomal subunit protein eL18 (121 aa).

It belongs to the eukaryotic ribosomal protein eL18 family.

The chain is Large ribosomal subunit protein eL18 from Methanosphaerula palustris (strain ATCC BAA-1556 / DSM 19958 / E1-9c).